Here is a 755-residue protein sequence, read N- to C-terminus: Cellulose synthase-like protein B4 (755 aa).

A run of 2 helical transmembrane segments spans residues alanine 24–valine 44 and threonine 49–threonine 69. Residues aspartate 136 and aspartate 461 contribute to the active site. 6 helical membrane passes run alanine 533–tyrosine 556, valine 569–phenylalanine 589, leucine 615–valine 635, phenylalanine 674–glycine 694, glycine 702–leucine 722, and isoleucine 733–valine 753.

This sequence belongs to the glycosyltransferase 2 family. Plant cellulose synthase-like B subfamily.

Its subcellular location is the golgi apparatus membrane. Functionally, thought to be a Golgi-localized beta-glycan synthase that polymerize the backbones of noncellulosic polysaccharides (hemicelluloses) of plant cell wall. This chain is Cellulose synthase-like protein B4 (CSLB4), found in Arabidopsis thaliana (Mouse-ear cress).